The primary structure comprises 860 residues: Protein argonaute-2 (860 aa).

Y2 is modified (3'-nitrotyrosine). The region spanning 230–349 is the PAZ domain; it reads PVIEFVCEVL…LPLEVCNIVA (120 aa). An interaction with guide RNA region spans residues 312–317; the sequence is YFKDRH. S388 carries the phosphoserine modification. Residues 518–819 form the Piwi domain; it reads LVVVILPGKT…VAFRARYHLV (302 aa). Residues 525 to 567 are interaction with guide RNA; sequence GKTPVYAEVKRVGDTVLGMATQCVQMKNVQRTTPQTLSNLCLK. An interaction with GW182 family members region spans residues 588-591; it reads FQQP. D598 contacts a divalent metal cation. Residues 651–661 form an interaction with GW182 family members region; the sequence is LIQFYKSTRFK. D670 contacts a divalent metal cation. Residue P701 is modified to 4-hydroxyproline. Interaction with guide RNA stretches follow at residues 710–711, 754–762, and 791–813; these read KR, HAGIQGTSR, and YVRCTRSVSIPAPAYYAHLVAFR. Position 808 (H808) interacts with a divalent metal cation. Phosphoserine occurs at positions 825, 829, 832, and 835.

It belongs to the argonaute family. Ago subfamily. Interacts with DICER1 through its Piwi domain and with TARBP2 during assembly of the RNA-induced silencing complex (RISC). Together, DICER1, AGO2 and TARBP2 constitute the trimeric RISC loading complex (RLC), or micro-RNA (miRNA) loading complex (miRLC). Within the RLC/miRLC, DICER1 and TARBP2 are required to process precursor miRNAs (pre-miRNAs) to mature miRNAs and then load them onto AGO2. AGO2 bound to the mature miRNA constitutes the minimal RISC and may subsequently dissociate from DICER1 and TARBP2. Note however that the term RISC has also been used to describe the trimeric RLC/miRLC. The formation of RISC complexes containing siRNAs rather than miRNAs appears to occur independently of DICER1. Interacts with AGO1. Also interacts with DDB1, DDX5, DDX6, DDX20, DHX30, DHX36, DDX47, DHX9, ELAVL, FXR1, GEMIN4, HNRNPF, IGF2BP1, ILF3, IMP8, MATR3, PABPC1, PRMT5, P4HA1, P4HB, RBM4, SART3, TNRC6A, TNRC6B, UPF1 and YBX1. Interacts with the P-body components DCP1A and XRN1. Associates with polysomes and messenger ribonucleoproteins (mNRPs). Interacts with RBM4; the interaction is modulated under stress-induced conditions, occurs under both cell proliferation and differentiation conditions and in an RNA- and phosphorylation-independent manner. Interacts with LIMD1, WTIP and AJUBA. Interacts with TRIM71. Interacts with APOBEC3G in an RNA-dependent manner. Interacts with APOBEC3A, APOBEC3C, APOBEC3F and APOBEC3H. Interacts with DICER1, TARBP2, EIF6, MOV10 and RPL7A (60S ribosome subunit); they form a large RNA-induced silencing complex (RISC). Interacts with FMR1. Interacts with ZFP36. Interacts with RC3H1; the interaction is RNA independent. Interacts with ARB2A. Found in a complex composed of AGO2, CHD7 and ARB2A. Interacts with SND1 and SYT11. Interacts with CLNK. Interacts with GARRE1. Interacts with GRB2; this interaction is important for the formation of a ternary complex containing GRB2, AGO2 and DICER1. Requires Mg(2+) as cofactor. Mn(2+) serves as cofactor. In terms of processing, hydroxylated. 4-hydroxylation appears to enhance protein stability but is not required for miRNA-binding or endonuclease activity. Ubiquitinated on surface-exposed lysines by a SCF-like E3 ubiquitin-protein ligase complex containing ZSWIM8 during target-directed microRNA degradation (TDMD), a process that mediates degradation of microRNAs (miRNAs). Ubiquitination by the SCF-like E3 ubiquitin-protein ligase complex containing ZSWIM8 leads to its subsequent degradation, thereby exposing miRNAs for degradation. ZSWIM8 recognizes and binds AGO2 when it is engaged with a TDMD target. Post-translationally, phosphorylation at Ser-388 by AKT3; leads to up-regulate translational repression of microRNA target and down-regulate endonucleolytic cleavage. In terms of processing, a phosphorylation cycle of C-terminal serine cluster (Ser-825-Ser-835) regulates the release of target mRNAs. Target-binding leads to phosphorylation of these residues by CSNK1A1, which reduces the affinity of AGO2 for mRNA and enables target release. The ANKRD52-PPP6C phosphatase complex dephosphorylates the residues, which primes AGO2 for binding a new target. Ubiquitous expression in 9.5 day embryos with highest levels in forebrain, heart, limb buds, and branchial arches.

The protein localises to the cytoplasm. It localises to the P-body. Its subcellular location is the nucleus. It catalyses the reaction Endonucleolytic cleavage to 5'-phosphomonoester.. Functionally, required for RNA-mediated gene silencing (RNAi) by the RNA-induced silencing complex (RISC). The 'minimal RISC' appears to include AGO2 bound to a short guide RNA such as a microRNA (miRNA) or short interfering RNA (siRNA). These guide RNAs direct RISC to complementary mRNAs that are targets for RISC-mediated gene silencing. The precise mechanism of gene silencing depends on the degree of complementarity between the miRNA or siRNA and its target. Binding of RISC to a perfectly complementary mRNA generally results in silencing due to endonucleolytic cleavage of the mRNA specifically by AGO2. Binding of RISC to a partially complementary mRNA results in silencing through inhibition of translation, and this is independent of endonuclease activity. May inhibit translation initiation by binding to the 7-methylguanosine cap, thereby preventing the recruitment of the translation initiation factor eIF4-E. May also inhibit translation initiation via interaction with EIF6, which itself binds to the 60S ribosomal subunit and prevents its association with the 40S ribosomal subunit. The inhibition of translational initiation leads to the accumulation of the affected mRNA in cytoplasmic processing bodies (P-bodies), where mRNA degradation may subsequently occur. In some cases RISC-mediated translational repression is also observed for miRNAs that perfectly match the 3' untranslated region (3'-UTR). Can also up-regulate the translation of specific mRNAs under certain growth conditions. Binds to the AU element of the 3'-UTR of the TNF (TNF-alpha) mRNA and up-regulates translation under conditions of serum starvation. Also required for transcriptional gene silencing (TGS), in which short RNAs known as antigene RNAs or agRNAs direct the transcriptional repression of complementary promoter regions. Regulates lymphoid and erythroid development and function, and this is independent of endonuclease activity. The sequence is that of Protein argonaute-2 (Ago2) from Mus musculus (Mouse).